The following is a 212-amino-acid chain: Cell division protein YtfB (212 aa).

Residues 34–50 (GIIIAAIVLVVGFLLPS) form a helical membrane-spanning segment. The interval 88-127 (NDPDQVAPVAPEPIQEGQPEEQPQTTQTQPFQPDSGIDNQ) is disordered. The span at 99 to 120 (EPIQEGQPEEQPQTTQTQPFQP) shows a compositional bias: low complexity. Residues 117-212 (PFQPDSGIDN…QPDGSFIRAR (96 aa)) form an oapA region.

It belongs to the OapA family.

The protein localises to the cell inner membrane. In terms of biological role, cell division protein whose function is related to the generation of a transient cell wall structure. Function is linked to the late stages of cell division. The chain is Cell division protein YtfB (ytfB) from Escherichia coli (strain K12).